The primary structure comprises 207 residues: Small ribosomal subunit protein uS4A (207 aa).

The region spanning Arg-98–Ala-161 is the S4 RNA-binding domain.

It belongs to the universal ribosomal protein uS4 family. As to quaternary structure, part of the 30S ribosomal subunit. Contacts protein S5. The interaction surface between S4 and S5 is involved in control of translational fidelity.

Functionally, one of the primary rRNA binding proteins, it binds directly to 16S rRNA where it nucleates assembly of the body of the 30S subunit. Its function is as follows. With S5 and S12 plays an important role in translational accuracy. This is Small ribosomal subunit protein uS4A from Symbiobacterium thermophilum (strain DSM 24528 / JCM 14929 / IAM 14863 / T).